We begin with the raw amino-acid sequence, 207 residues long: Small ribosomal subunit protein uS10m (207 aa).

Residues 1–14 (MNMFRQAVRSFVRY) constitute a mitochondrion transit peptide.

The protein belongs to the universal ribosomal protein uS10 family. Part of the mitochondrial small ribosomal subunit.

It localises to the mitochondrion. In terms of biological role, involved in mitochondrial genome encoded proteins translation. Involved in the binding of tRNA to the ribosomes. The chain is Small ribosomal subunit protein uS10m (RSM10) from Kluyveromyces lactis (strain ATCC 8585 / CBS 2359 / DSM 70799 / NBRC 1267 / NRRL Y-1140 / WM37) (Yeast).